Consider the following 261-residue polypeptide: DNA repair protein RecO (261 aa).

This sequence belongs to the RecO family.

Involved in DNA repair and RecF pathway recombination. This Pelodictyon phaeoclathratiforme (strain DSM 5477 / BU-1) protein is DNA repair protein RecO.